Here is a 703-residue protein sequence, read N- to C-terminus: NADH-quinone oxidoreductase chain 12 (703 aa).

Transmembrane regions (helical) follow at residues 4-24 (FVLFAPLIASLIAGLGWRAIG), 30-50 (YLTTGVLFLSCLISWYLFLSF), 79-99 (LTAIMLIVVTTVSALVHMYSL), 116-136 (ARFFAYLSFFTFAMLMLVTAD), 138-158 (LLQMFFGWEGVGVASYLLIGF), 179-199 (GDFGFLLGIFGIYWLTGSVQF), 224-244 (ANLLGFLLFVGAMGKSAQLLL), 256-276 (TPVSALIHAATMVTAGVFLVC), 290-310 (NFIVIIGATTAFFAATVGLVQ), 325-345 (LGYMFVAAGVGVYSAAMFHLL), 346-366 (THAFFKAMLFLGAGSVIHAMH), 381-401 (IPLTFWAMMIGTFAITGVGIP), 415-435 (AIIESAYAGSGYAFWLLVIAA), 475-495 (LGVLAIGAVFAGMVWYGPFFG), 580-600 (VSPFVAMVLGLITAWTFYIAN), and 679-699 (LFHYAFAMVLGIVGLLIWVMM).

Belongs to the complex I subunit 5 family. As to quaternary structure, NDH-1 is composed of at least 14 different subunits, Nqo1 to Nqo14. The complex has a L-shaped structure, with the hydrophobic arm (subunits Nqo7, Nqo8, Nqo10 to Nqo14) embedded in the inner membrane and the hydrophilic peripheral arm (subunits Nqo1 to Nqo6, Nqo9) protruding into the bacterial cytoplasm. The hydrophilic domain contains all the redox centers.

The protein localises to the cell inner membrane. The enzyme catalyses a quinone + NADH + 5 H(+)(in) = a quinol + NAD(+) + 4 H(+)(out). Its function is as follows. NDH-1 shuttles electrons from NADH, via FMN and iron-sulfur (Fe-S) centers, to quinones in the respiratory chain. The immediate electron acceptor for the enzyme in this species is believed to be ubiquinone. Couples the redox reaction to proton translocation (for every two electrons transferred, four hydrogen ions are translocated across the cytoplasmic membrane), and thus conserves the redox energy in a proton gradient. This chain is NADH-quinone oxidoreductase chain 12, found in Paracoccus denitrificans.